The following is a 176-amino-acid chain: Urease accessory protein UreE (176 aa).

The protein belongs to the UreE family.

The protein resides in the cytoplasm. Involved in urease metallocenter assembly. Binds nickel. Probably functions as a nickel donor during metallocenter assembly. In Helicobacter bizzozeronii, this protein is Urease accessory protein UreE.